We begin with the raw amino-acid sequence, 325 residues long: MRVENNNVSGQNHDPEQIDLIDLLVQLWRGKMTIIISVIVAIALAIGYLAVAKEKWTSTAIITQPDVGQIAGYNNAMNVIYGQAAPKVSDLQETLIGRFSSAFSALAETLDNQEEPEKLTIEPSVKNQQLPLTVSYVGQTAEGAQMKLAQYIQQVDDKVNQELEKDLKDNIALGRKNLQDSLRTQEVVAQEQKDLRIRQIQEALQYANQAQVTKPQVQQTEDVTQDTLFLLGSEALESMIKHEATRPLVFSPNYYQTRQNLLDIEKLKFDDLDIHAYRYVMKPTLPIRRDSPKKAITLILAVLLGGMVGAGIVLGRNALRNYNAK.

The Cytoplasmic segment spans residues 1–31 (MRVENNNVSGQNHDPEQIDLIDLLVQLWRGK). Residues 32-52 (MTIIISVIVAIALAIGYLAVA) form a helical membrane-spanning segment. At 53 to 294 (KEKWTSTAII…LPIRRDSPKK (242 aa)) the chain is on the periplasmic side. The chain crosses the membrane as a helical span at residues 295 to 315 (AITLILAVLLGGMVGAGIVLG). Residues 316–325 (RNALRNYNAK) lie on the Cytoplasmic side of the membrane.

Belongs to the WzzB/Cld/Rol family.

It localises to the cell inner membrane. It participates in bacterial outer membrane biogenesis; lipopolysaccharide biosynthesis. Functionally, confers a modal distribution of chain length on the O-antigen component of lipopolysaccharide (LPS). Gives rise to a reduced number of short chain molecules and increases in numbers of longer molecules. The chain is Chain length determinant protein (wzzB) from Shigella flexneri.